The sequence spans 87 residues: uncharacterized protein (87 aa).

Belongs to the YlmC/YmxH family.

This is an uncharacterized protein from Clostridium acetobutylicum (strain ATCC 824 / DSM 792 / JCM 1419 / IAM 19013 / LMG 5710 / NBRC 13948 / NRRL B-527 / VKM B-1787 / 2291 / W).